The primary structure comprises 508 residues: Galactose-1-phosphate uridylyltransferase (508 aa).

This sequence belongs to the galactose-1-phosphate uridylyltransferase type 2 family.

The protein localises to the cytoplasm. The enzyme catalyses alpha-D-galactose 1-phosphate + UDP-alpha-D-glucose = alpha-D-glucose 1-phosphate + UDP-alpha-D-galactose. Its pathway is carbohydrate metabolism; galactose metabolism. This Halalkalibacterium halodurans (strain ATCC BAA-125 / DSM 18197 / FERM 7344 / JCM 9153 / C-125) (Bacillus halodurans) protein is Galactose-1-phosphate uridylyltransferase (galT).